The chain runs to 454 residues: Putative KilA-N domain-containing protein L4 (454 aa).

Basic residues predominate over residues 1–12 (MPQKTSKSKSSR). The disordered stretch occupies residues 1-159 (MPQKTSKSKS…DVPEEEYDDN (159 aa)). Positions 14 to 64 (RYIEDSDDETRGRSRNRSIEKSRSRSLDKSQKKSRDKSLTRSRSKSPEKSK) are enriched in basic and acidic residues. Residues 65–79 (SRSKSLTRSRSKSPK) show a composition bias toward basic residues. Composition is skewed to acidic residues over residues 98-123 (YTTEESDEESDDESDGETNEESDEEL) and 130-158 (ESDEEISEESDEEISEESDEDVPEEEYDD). Residues 172 to 276 (EFARGKFGDF…LKVSDIVIEY (105 aa)) form the KilA-N domain.

In Acanthamoeba polyphaga mimivirus (APMV), this protein is Putative KilA-N domain-containing protein L4.